The chain runs to 340 residues: Outer membrane protein B (340 aa).

An N-terminal signal peptide occupies residues methionine 1–alanine 26.

The protein belongs to the chlamydial OMP family.

Its subcellular location is the cell outer membrane. The polypeptide is Outer membrane protein B (ompB) (Chlamydia muridarum (strain MoPn / Nigg)).